The primary structure comprises 343 residues: MSSSPKLFHARPSFFTRRSTPLIVFTSLAIGLTGFLFGLSTILFPGLRLSGRSCLTNLPPKTVKIVWDVAGNSIVNGEVKRHKVMGFVGIQTGFRSAGRRRALRNTWMPSDPEGLRRLEESTGLAIRFIIGKTKDEAKMVELRSEVAMYDDFILLDIEEEYSKLPYKTLAFFKAAYALYDSEFYVKADDDIYLRPDRLSLLLAKERGHSQTYLGCMKKGPVFTDPKLKWYEPLADLLGKEYFLHAYGPIYALSADVVTSLVALKNNSFRMFSNEDVTIGAWMLAMNVNHENLHTLCEPECSPYSIAVWDIPKCSGLCNPEKRMLELHMLESCSKSPTLPSDDE.

A helical; Signal-anchor for type II membrane protein membrane pass occupies residues L22–I42. Residue N265 is glycosylated (N-linked (GlcNAc...) asparagine).

This sequence belongs to the glycosyltransferase 31 family. Mn(2+) serves as cofactor.

The protein resides in the golgi apparatus membrane. It functions in the pathway protein modification; protein glycosylation. Its function is as follows. Beta-1,3-galactosyltransferase that transfers galactose from UDP-galactose to substrates with a terminal glycosyl residue. The protein is Probable beta-1,3-galactosyltransferase 13 (B3GALT13) of Arabidopsis thaliana (Mouse-ear cress).